Here is a 396-residue protein sequence, read N- to C-terminus: Jacalin-related lectin 45 (396 aa).

Jacalin-type lectin domains follow at residues 3 to 138 (KKVT…KTSH), 144 to 264 (QFRM…NFAV), and 270 to 392 (VKKL…YVKP).

The protein belongs to the jacalin lectin family.

The chain is Jacalin-related lectin 45 (JAL45) from Arabidopsis thaliana (Mouse-ear cress).